The primary structure comprises 164 residues: Putative pre-16S rRNA nuclease (164 aa).

It belongs to the YqgF nuclease family.

It localises to the cytoplasm. Could be a nuclease involved in processing of the 5'-end of pre-16S rRNA. The protein is Putative pre-16S rRNA nuclease of Caulobacter sp. (strain K31).